Here is a 461-residue protein sequence, read N- to C-terminus: Bifunctional protein GlmU (461 aa).

The pyrophosphorylase stretch occupies residues 1–232 (MNLQIIILAA…SFEVQGINNR (232 aa)). UDP-N-acetyl-alpha-D-glucosamine contacts are provided by residues 8-11 (LAAG), K22, Q73, and 78-79 (GT). Residue D102 coordinates Mg(2+). G142, E157, and N230 together coordinate UDP-N-acetyl-alpha-D-glucosamine. N230 is a binding site for Mg(2+). The segment at 233 to 253 (QQLQQLERIWQQRAANQLMEK) is linker. An N-acetyltransferase region spans residues 254-461 (GATLADANRF…WKRPVKRERD (208 aa)). 2 residues coordinate UDP-N-acetyl-alpha-D-glucosamine: R336 and K354. The active-site Proton acceptor is H366. UDP-N-acetyl-alpha-D-glucosamine is bound by residues Y369 and N380. Acetyl-CoA contacts are provided by residues A383, 389-390 (NY), S408, and A426.

This sequence in the N-terminal section; belongs to the N-acetylglucosamine-1-phosphate uridyltransferase family. It in the C-terminal section; belongs to the transferase hexapeptide repeat family. Homotrimer. The cofactor is Mg(2+).

It is found in the cytoplasm. The enzyme catalyses alpha-D-glucosamine 1-phosphate + acetyl-CoA = N-acetyl-alpha-D-glucosamine 1-phosphate + CoA + H(+). It carries out the reaction N-acetyl-alpha-D-glucosamine 1-phosphate + UTP + H(+) = UDP-N-acetyl-alpha-D-glucosamine + diphosphate. The protein operates within nucleotide-sugar biosynthesis; UDP-N-acetyl-alpha-D-glucosamine biosynthesis; N-acetyl-alpha-D-glucosamine 1-phosphate from alpha-D-glucosamine 6-phosphate (route II): step 2/2. It functions in the pathway nucleotide-sugar biosynthesis; UDP-N-acetyl-alpha-D-glucosamine biosynthesis; UDP-N-acetyl-alpha-D-glucosamine from N-acetyl-alpha-D-glucosamine 1-phosphate: step 1/1. It participates in bacterial outer membrane biogenesis; LPS lipid A biosynthesis. Its function is as follows. Catalyzes the last two sequential reactions in the de novo biosynthetic pathway for UDP-N-acetylglucosamine (UDP-GlcNAc). The C-terminal domain catalyzes the transfer of acetyl group from acetyl coenzyme A to glucosamine-1-phosphate (GlcN-1-P) to produce N-acetylglucosamine-1-phosphate (GlcNAc-1-P), which is converted into UDP-GlcNAc by the transfer of uridine 5-monophosphate (from uridine 5-triphosphate), a reaction catalyzed by the N-terminal domain. The polypeptide is Bifunctional protein GlmU (Legionella pneumophila (strain Corby)).